The sequence spans 68 residues: MGVVLFIFLVLFPLATLQLDPDQPVERYAENKQLLNPDERRGIILHALGQRVCCPPESCTDRCLCCLG.

The signal sequence occupies residues 1 to 17 (MGVVLFIFLVLFPLATL). The propeptide occupies 18 to 51 (QLDPDQPVERYAENKQLLNPDERRGIILHALGQR). 3 cysteine pairs are disulfide-bonded: Cys-53–Cys-65, Cys-54–Cys-63, and Cys-59–Cys-66. Leu-67 carries the post-translational modification Leucine amide.

Belongs to the conotoxin M superfamily. As to expression, expressed by the venom duct.

The protein localises to the secreted. The chain is Conotoxin PnMLKM-011 from Conus pennaceus (Feathered cone).